Consider the following 703-residue polypeptide: Methionine--tRNA ligase (703 aa).

The short motif at 12–22 (PYANGPLHIGH) is the 'HIGH' region element. Zn(2+)-binding residues include Cys143, Cys146, Cys156, and Cys159. A 'KMSKS' region motif is present at residues 331 to 335 (KMSKT). Position 334 (Lys334) interacts with ATP. Low complexity-rich tracts occupy residues 556–568 (AAPQAAEARPAKG) and 577–594 (EAPAATQAAAPSAGAAES). 2 disordered regions span residues 556–594 (AAPQAAEARPAKGAKTEKKPAEAPAATQAAAPSAGAAES) and 682–703 (GPGGKELSLLDPGDVAPGSEVK). A tRNA-binding domain is found at 602 to 703 (DFAKVVLKAG…GDVAPGSEVK (102 aa)).

The protein belongs to the class-I aminoacyl-tRNA synthetase family. MetG type 1 subfamily. As to quaternary structure, homodimer. Zn(2+) serves as cofactor.

The protein resides in the cytoplasm. It catalyses the reaction tRNA(Met) + L-methionine + ATP = L-methionyl-tRNA(Met) + AMP + diphosphate. In terms of biological role, is required not only for elongation of protein synthesis but also for the initiation of all mRNA translation through initiator tRNA(fMet) aminoacylation. This chain is Methionine--tRNA ligase, found in Myxococcus xanthus (strain DK1622).